The following is a 369-amino-acid chain: Anhydro-N-acetylmuramic acid kinase (369 aa).

12–19 (GTSMDGVD) serves as a coordination point for ATP.

This sequence belongs to the anhydro-N-acetylmuramic acid kinase family.

It catalyses the reaction 1,6-anhydro-N-acetyl-beta-muramate + ATP + H2O = N-acetyl-D-muramate 6-phosphate + ADP + H(+). The protein operates within amino-sugar metabolism; 1,6-anhydro-N-acetylmuramate degradation. Its pathway is cell wall biogenesis; peptidoglycan recycling. Its function is as follows. Catalyzes the specific phosphorylation of 1,6-anhydro-N-acetylmuramic acid (anhMurNAc) with the simultaneous cleavage of the 1,6-anhydro ring, generating MurNAc-6-P. Is required for the utilization of anhMurNAc either imported from the medium or derived from its own cell wall murein, and thus plays a role in cell wall recycling. This Shewanella pealeana (strain ATCC 700345 / ANG-SQ1) protein is Anhydro-N-acetylmuramic acid kinase.